A 300-amino-acid polypeptide reads, in one-letter code: Ribonuclease HIII (300 aa).

Residues 86–300 (RPRLGVDESG…FYEICDSTDI (215 aa)) enclose the RNase H type-2 domain. A divalent metal cation is bound by residues Asp92, Glu93, and Asp196.

Belongs to the RNase HII family. RnhC subfamily. Mn(2+) serves as cofactor. The cofactor is Mg(2+).

It localises to the cytoplasm. The catalysed reaction is Endonucleolytic cleavage to 5'-phosphomonoester.. Functionally, endonuclease that specifically degrades the RNA of RNA-DNA hybrids. This is Ribonuclease HIII from Chlamydia abortus (strain DSM 27085 / S26/3) (Chlamydophila abortus).